A 315-amino-acid polypeptide reads, in one-letter code: MISVNELALEIFDNLANYSEDFNVAYHELDNGAKIVDCGVSVPGGYAAGRAFTEICMGGLGEVNFRMGQIKHVPMPFIEVSTDYPAISCLGAQKAGWTVKAGNYFAMGSGPARALALKPKHTYEVIGYEDESDDAVIALESDHLPNGEVMEKIAKDCGIDVENLCAVVAPTASLVGSIQVCGRCVETAVYKLNELGFDTRKITAAMGTAPIPPVKADATKAMGTTNDATIYHGQISLTMKAPDIVDFLEKIPSNKSKGYGKPFYEIFKEANFDFYQIDTSLFSPAEVTINELTEGKVYHVGEVNPDVTLKSFGYL.

This sequence belongs to the MCH family.

Its subcellular location is the cytoplasm. The catalysed reaction is 5,10-methenyl-5,6,7,8-tetrahydromethanopterin + H2O = N(5)-formyl-5,6,7,8-tetrahydromethanopterin + H(+). Its pathway is one-carbon metabolism; methanogenesis from CO(2); 5,10-methenyl-5,6,7,8-tetrahydromethanopterin from CO(2): step 3/3. Its function is as follows. Catalyzes the reversible interconversion of 5-formyl-H(4)MPT to methenyl-H(4)MPT(+). The chain is Methenyltetrahydromethanopterin cyclohydrolase from Methanospirillum hungatei JF-1 (strain ATCC 27890 / DSM 864 / NBRC 100397 / JF-1).